Reading from the N-terminus, the 564-residue chain is Pyruvate decarboxylase (564 aa).

Residues D28 and H115 each coordinate pyruvate. Thiamine diphosphate-binding positions include T390 and 413–415; that span reads GSI. Residue D444 coordinates Mg(2+). Thiamine diphosphate-binding positions include 445–446 and 471–476; these read GS and NDGYTI. Mg(2+) is bound by residues N471 and G473. Residue E477 participates in pyruvate binding.

This sequence belongs to the TPP enzyme family. As to quaternary structure, homotetramer. It depends on Mg(2+) as a cofactor. The cofactor is thiamine diphosphate.

The enzyme catalyses a 2-oxocarboxylate + H(+) = an aldehyde + CO2. The catalysed reaction is pyruvate + H(+) = acetaldehyde + CO2. This Kluyveromyces marxianus (Yeast) protein is Pyruvate decarboxylase (PDC1).